Consider the following 360-residue polypeptide: Holliday junction branch migration complex subunit RuvB (360 aa).

Positions 1-23 (MIASVGDSRYYPKSVANGEKSDQ) are disordered. A large ATPase domain (RuvB-L) region spans residues 12–204 (PKSVANGEKS…FGIVLRLEFY (193 aa)). ATP contacts are provided by residues L43, R44, G85, K88, T89, T90, 151-153 (EDY), R194, Y204, and R241. T89 is a Mg(2+) binding site. The interval 205 to 275 (TTEDLKIILK…TAQKALEMLE (71 aa)) is small ATPAse domain (RuvB-S). The interval 278–360 (QHGFDEVDRR…KPPKKQDSLF (83 aa)) is head domain (RuvB-H). DNA contacts are provided by R333 and R338.

The protein belongs to the RuvB family. In terms of assembly, homohexamer. Forms an RuvA(8)-RuvB(12)-Holliday junction (HJ) complex. HJ DNA is sandwiched between 2 RuvA tetramers; dsDNA enters through RuvA and exits via RuvB. An RuvB hexamer assembles on each DNA strand where it exits the tetramer. Each RuvB hexamer is contacted by two RuvA subunits (via domain III) on 2 adjacent RuvB subunits; this complex drives branch migration. In the full resolvosome a probable DNA-RuvA(4)-RuvB(12)-RuvC(2) complex forms which resolves the HJ.

It localises to the cytoplasm. It carries out the reaction ATP + H2O = ADP + phosphate + H(+). Its function is as follows. The RuvA-RuvB-RuvC complex processes Holliday junction (HJ) DNA during genetic recombination and DNA repair, while the RuvA-RuvB complex plays an important role in the rescue of blocked DNA replication forks via replication fork reversal (RFR). RuvA specifically binds to HJ cruciform DNA, conferring on it an open structure. The RuvB hexamer acts as an ATP-dependent pump, pulling dsDNA into and through the RuvAB complex. RuvB forms 2 homohexamers on either side of HJ DNA bound by 1 or 2 RuvA tetramers; 4 subunits per hexamer contact DNA at a time. Coordinated motions by a converter formed by DNA-disengaged RuvB subunits stimulates ATP hydrolysis and nucleotide exchange. Immobilization of the converter enables RuvB to convert the ATP-contained energy into a lever motion, pulling 2 nucleotides of DNA out of the RuvA tetramer per ATP hydrolyzed, thus driving DNA branch migration. The RuvB motors rotate together with the DNA substrate, which together with the progressing nucleotide cycle form the mechanistic basis for DNA recombination by continuous HJ branch migration. Branch migration allows RuvC to scan DNA until it finds its consensus sequence, where it cleaves and resolves cruciform DNA. The polypeptide is Holliday junction branch migration complex subunit RuvB (Koribacter versatilis (strain Ellin345)).